Consider the following 474-residue polypeptide: Dihydrolipoyl dehydrogenase (474 aa).

FAD contacts are provided by residues 39–47 (EKDAYGGTC), lysine 56, and alanine 118. A disulfide bridge links cysteine 47 with cysteine 52. NAD(+)-binding positions include 186–190 (GGGYI), glutamate 209, and 275–278 (AVGR). The FAD site is built by aspartate 318 and alanine 326. The active-site Proton acceptor is histidine 450.

The protein belongs to the class-I pyridine nucleotide-disulfide oxidoreductase family. In terms of assembly, homodimer. Requires FAD as cofactor.

It localises to the cytoplasm. The catalysed reaction is N(6)-[(R)-dihydrolipoyl]-L-lysyl-[protein] + NAD(+) = N(6)-[(R)-lipoyl]-L-lysyl-[protein] + NADH + H(+). The sequence is that of Dihydrolipoyl dehydrogenase (lpdA) from Halobacterium salinarum (strain ATCC 700922 / JCM 11081 / NRC-1) (Halobacterium halobium).